A 465-amino-acid chain; its full sequence is Ribulose bisphosphate carboxylase large chain (465 aa).

Lysine 4 bears the N6,N6,N6-trimethyllysine mark. 2 residues coordinate substrate: asparagine 113 and threonine 163. Lysine 165 acts as the Proton acceptor in catalysis. Residue lysine 167 participates in substrate binding. Positions 191, 193, and 194 each coordinate Mg(2+). An N6-carboxylysine modification is found at lysine 191. Residue histidine 284 is the Proton acceptor of the active site. 3 residues coordinate substrate: arginine 285, histidine 317, and serine 369.

The protein belongs to the RuBisCO large chain family. Type I subfamily. In terms of assembly, heterohexadecamer of 8 large chains and 8 small chains. The cofactor is Mg(2+).

It localises to the plastid. It is found in the chloroplast. It catalyses the reaction 2 (2R)-3-phosphoglycerate + 2 H(+) = D-ribulose 1,5-bisphosphate + CO2 + H2O. The enzyme catalyses D-ribulose 1,5-bisphosphate + O2 = 2-phosphoglycolate + (2R)-3-phosphoglycerate + 2 H(+). Its function is as follows. RuBisCO catalyzes two reactions: the carboxylation of D-ribulose 1,5-bisphosphate, the primary event in carbon dioxide fixation, as well as the oxidative fragmentation of the pentose substrate in the photorespiration process. Both reactions occur simultaneously and in competition at the same active site. This chain is Ribulose bisphosphate carboxylase large chain, found in Sarracenia flava (Yellow pitcher plant).